Here is a 274-residue protein sequence, read N- to C-terminus: 3',5'-cyclic adenosine monophosphate phosphodiesterase CpdA (274 aa).

Fe cation-binding residues include aspartate 21, histidine 23, aspartate 63, asparagine 93, histidine 163, histidine 202, and histidine 204. Residues histidine 23, aspartate 63, and asparagine 93–histidine 94 contribute to the AMP site. Histidine 204 contacts AMP.

It belongs to the cyclic nucleotide phosphodiesterase class-III family. Fe(2+) serves as cofactor.

The enzyme catalyses 3',5'-cyclic AMP + H2O = AMP + H(+). In terms of biological role, hydrolyzes cAMP to 5'-AMP. Plays an important regulatory role in modulating the intracellular concentration of cAMP, thereby influencing cAMP-dependent processes. May coordinate responses to nutritional stress, ensuring optimal competence development. The sequence is that of 3',5'-cyclic adenosine monophosphate phosphodiesterase CpdA from Haemophilus influenzae (strain ATCC 51907 / DSM 11121 / KW20 / Rd).